Here is a 647-residue protein sequence, read N- to C-terminus: RAF proto-oncogene serine/threonine-protein kinase (647 aa).

At Ser43 the chain carries Phosphoserine. Residues 56 to 131 (NTIRVFLPNK…IGEELQVDFL (76 aa)) form the RBD domain. The Phorbol-ester/DAG-type zinc finger occupies 138-184 (THNFARKTFLKLAFCDICQKFLLNGFRCQTCGYKFHEHCSTKVPTMC). 2 disordered regions span residues 236–269 (HVFT…VSTT) and 284–334 (HSES…RPRG). Residues 239 to 269 (TFNTSNPSSEGTLSQRQRSTSTPNVHMVSTT) are compositionally biased toward polar residues. Phosphoserine is present on Ser259. Thr268 carries the phosphothreonine; by autocatalysis modification. Positions 286–297 (ESASPSALSGSP) are enriched in low complexity. Polar residues predominate over residues 298–309 (NNMSPTGWSQPK). Phosphoserine is present on Ser338. Positions 349 to 609 (VMLSTRIGSG…PQILSSIELL (261 aa)) constitute a Protein kinase domain. ATP is bound by residues 355-363 (IGSGSFGTV) and Lys375. Asp468 acts as the Proton acceptor in catalysis. Residues Ser499 and Ser621 each carry the phosphoserine modification.

It belongs to the protein kinase superfamily. TKL Ser/Thr protein kinase family. RAF subfamily. In terms of processing, phosphorylation at Ser-259 inactivates kinase activity. Dephosphorylation of Ser-259 by a complex containing protein phosphatase 1 relieves inactivation, leading to stimulate RAF1 activity. In terms of tissue distribution, isoform 1 was present in all tissues tested: skeletal muscle, intestine, brain, gizzard, heart, lung, kidney, bone marrow, spleen and bursa of Fabricius. Isoform 2 was only detected in brain, heart and skeletal muscle. In brain and heart isoform 1 is more abundant than isoform 2. In skeletal muscle isoform 2 is more abundant than isoform 1.

The protein localises to the cytoplasm. The protein resides in the cell membrane. The catalysed reaction is L-seryl-[protein] + ATP = O-phospho-L-seryl-[protein] + ADP + H(+). The enzyme catalyses L-threonyl-[protein] + ATP = O-phospho-L-threonyl-[protein] + ADP + H(+). Its function is as follows. Serine/threonine-protein kinase that acts as a regulatory link between the membrane-associated Ras GTPases and the MAPK/ERK cascade, and this critical regulatory link functions as a switch determining cell fate decisions. RAF1 activation initiates a mitogen-activated protein kinase (MAPK) cascade that comprises a sequential phosphorylation of the dual-specific MAPK kinases (MAP2K1/MEK1 and MAP2K2/MEK2) and the extracellular signal-regulated kinases (MAPK3/ERK1 and MAPK1/ERK2). The protein is RAF proto-oncogene serine/threonine-protein kinase (RAF1) of Gallus gallus (Chicken).